The primary structure comprises 35 residues: MLVVIMFFIAFAFCSWLSYSYLRPYISTKELNKSR.

Residues 2–22 (LVVIMFFIAFAFCSWLSYSYL) traverse the membrane as a helical segment. At 23 to 35 (RPYISTKELNKSR) the chain is on the virion surface side.

It belongs to the orthopoxvirus OPG076 family. In terms of assembly, component of the entry fusion complex (EFC) composed of OPG053, OPG076, OPG086, OPG094, OPG095, OPG099, OPG107, OPG143, OPG104, OPG147 and OPG155. Except for OPG095 and OPG053, each of the EFC proteins is required for assembly or stability of the complex. Post-translationally, unglycosylated because produced in viral factories instead of the classic ER -Golgi route.

It is found in the virion membrane. Its function is as follows. Component of the entry fusion complex (EFC), which consists of 11 proteins. During cell infection, this complex mediates entry of the virion core into the host cytoplasm by a two-step mechanism consisting of lipid mixing of the viral and cellular membranes and subsequent pore formation. This chain is Entry-fusion complex protein OPG076 (OPG076), found in Vaccinia virus (strain Copenhagen) (VACV).